The chain runs to 432 residues: Glutamyl-tRNA reductase (432 aa).

Substrate is bound by residues 55 to 58 (TCNR), Ser114, 119 to 121 (ETQ), and Gln125. Cys56 serves as the catalytic Nucleophile. An NADP(+)-binding site is contributed by 194–199 (GAGEMI).

The protein belongs to the glutamyl-tRNA reductase family. As to quaternary structure, homodimer.

The enzyme catalyses (S)-4-amino-5-oxopentanoate + tRNA(Glu) + NADP(+) = L-glutamyl-tRNA(Glu) + NADPH + H(+). Its pathway is porphyrin-containing compound metabolism; protoporphyrin-IX biosynthesis; 5-aminolevulinate from L-glutamyl-tRNA(Glu): step 1/2. Its function is as follows. Catalyzes the NADPH-dependent reduction of glutamyl-tRNA(Glu) to glutamate 1-semialdehyde (GSA). This is Glutamyl-tRNA reductase from Burkholderia ambifaria (strain MC40-6).